The chain runs to 220 residues: Putative amino-acid transporter YisU (220 aa).

A run of 6 helical transmembrane segments spans residues 15 to 35 (FFSMNAIIHGIVLAFGLILPL), 67 to 87 (TLLIVLAVAGVSVIVQELPVF), 89 to 109 (TVMMAGGFLFLLYMGWVTWNI), 128 to 148 (AFAAAVSLLNPHAILDTIGVI), 161 to 181 (WLFMAACIAVSWIWFISLAIA), and 195 to 215 (MLIVNKCSAAVMWAAAGYFGV).

The protein belongs to the LysE/ArgO transporter (TC 2.A.75) family.

The protein localises to the cell membrane. The protein is Putative amino-acid transporter YisU (yisU) of Bacillus subtilis (strain 168).